Reading from the N-terminus, the 562-residue chain is ATP synthase subunit beta, mitochondrial (562 aa).

2 stretches are compositionally biased toward low complexity: residues 1-13 (MASR…LLRS) and 20-40 (SKSP…SSKS). Disordered stretches follow at residues 1-43 (MASR…SRAS) and 58-83 (SAAA…KITD). A mitochondrion-targeting transit peptide spans 1–55 (MASRRLLSSLLRSSSRRSVSKSPISNINPKLSSSSPSSKSRASPYGYLLTRAAEY). Residue 237-244 (GGAGVGKT) participates in ATP binding.

Belongs to the ATPase alpha/beta chains family. F-type ATPases have 2 components, CF(1) - the catalytic core - and CF(0) - the membrane proton channel. CF(1) has five subunits: alpha(3), beta(3), gamma(1), delta(1), epsilon(1). CF(0) has three main subunits: a, b and c.

It localises to the mitochondrion. It is found in the mitochondrion inner membrane. The enzyme catalyses ATP + H2O + 4 H(+)(in) = ADP + phosphate + 5 H(+)(out). Functionally, mitochondrial membrane ATP synthase (F(1)F(0) ATP synthase or Complex V) produces ATP from ADP in the presence of a proton gradient across the membrane which is generated by electron transport complexes of the respiratory chain. F-type ATPases consist of two structural domains, F(1) - containing the extramembraneous catalytic core, and F(0) - containing the membrane proton channel, linked together by a central stalk and a peripheral stalk. During catalysis, ATP synthesis in the catalytic domain of F(1) is coupled via a rotary mechanism of the central stalk subunits to proton translocation. Subunits alpha and beta form the catalytic core in F(1). Rotation of the central stalk against the surrounding alpha(3)beta(3) subunits leads to hydrolysis of ATP in three separate catalytic sites on the beta subunits. The polypeptide is ATP synthase subunit beta, mitochondrial (ATPB) (Hevea brasiliensis (Para rubber tree)).